Consider the following 326-residue polypeptide: UDP-3-O-acylglucosamine N-acyltransferase (326 aa).

The active-site Proton acceptor is the H235.

The protein belongs to the transferase hexapeptide repeat family. LpxD subfamily. In terms of assembly, homotrimer.

It carries out the reaction a UDP-3-O-[(3R)-3-hydroxyacyl]-alpha-D-glucosamine + a (3R)-hydroxyacyl-[ACP] = a UDP-2-N,3-O-bis[(3R)-3-hydroxyacyl]-alpha-D-glucosamine + holo-[ACP] + H(+). It functions in the pathway bacterial outer membrane biogenesis; LPS lipid A biosynthesis. Functionally, catalyzes the N-acylation of UDP-3-O-acylglucosamine using 3-hydroxyacyl-ACP as the acyl donor. Is involved in the biosynthesis of lipid A, a phosphorylated glycolipid that anchors the lipopolysaccharide to the outer membrane of the cell. The protein is UDP-3-O-acylglucosamine N-acyltransferase of Helicobacter hepaticus (strain ATCC 51449 / 3B1).